A 292-amino-acid polypeptide reads, in one-letter code: Pantothenate synthetase (292 aa).

30 to 37 provides a ligand contact to ATP; it reads MGALHEGH. The active-site Proton donor is the H37. (R)-pantoate is bound at residue Q61. Residue Q61 coordinates beta-alanine. 147–150 lines the ATP pocket; that stretch reads GEKD. Q153 serves as a coordination point for (R)-pantoate. Residue 184 to 187 participates in ATP binding; that stretch reads VSSR.

Belongs to the pantothenate synthetase family. In terms of assembly, homodimer.

The protein localises to the cytoplasm. It catalyses the reaction (R)-pantoate + beta-alanine + ATP = (R)-pantothenate + AMP + diphosphate + H(+). The protein operates within cofactor biosynthesis; (R)-pantothenate biosynthesis; (R)-pantothenate from (R)-pantoate and beta-alanine: step 1/1. Functionally, catalyzes the condensation of pantoate with beta-alanine in an ATP-dependent reaction via a pantoyl-adenylate intermediate. This chain is Pantothenate synthetase, found in Chlorobium phaeovibrioides (strain DSM 265 / 1930) (Prosthecochloris vibrioformis (strain DSM 265)).